The sequence spans 520 residues: Protein FAM124A (520 aa).

Disordered regions lie at residues 1–34 and 311–334; these read MDRKAGEDDWEDSGAETGGSDYSRLSSTSSELSV and FKSGKHKGRAGNGQVQHFGGSQMD. Over residues 20-32 the composition is skewed to low complexity; sequence SDYSRLSSTSSEL.

Belongs to the FAM124 family.

The chain is Protein FAM124A (fam124a) from Xenopus laevis (African clawed frog).